The primary structure comprises 298 residues: Probable 3-mercaptopyruvate sulfurtransferase (298 aa).

The Rhodanese 1 domain maps to 24-141; the sequence is NAQKTVLLDA…WKTEGLELET (118 aa). The tract at residues 142 to 175 is hinge; the sequence is GEPRTPKPVVYEGAKLNKDLVASFDDIVKVIESP. Ser164 bears the Phosphoserine mark. The Rhodanese 2 domain maps to 176–292; it reads DAAGVHIVDA…YGKRANEDSS (117 aa). Substrate is bound at residue Arg190. Cys252 (cysteine persulfide intermediate) is an active-site residue.

The protein resides in the mitochondrion. It carries out the reaction 2-oxo-3-sulfanylpropanoate + [thioredoxin]-dithiol = [thioredoxin]-disulfide + hydrogen sulfide + pyruvate + H(+). In terms of biological role, required for formation of the 2-thio group of the 5-methoxycarbonylmethyl-2-thiouridine modified base in some tRNAs. This chain is Probable 3-mercaptopyruvate sulfurtransferase (tum1), found in Schizosaccharomyces pombe (strain 972 / ATCC 24843) (Fission yeast).